Consider the following 488-residue polypeptide: Gamma-aminobutyric acid receptor subunit beta-4 (488 aa).

The N-terminal stretch at 1 to 25 is a signal peptide; sequence MWTFQADRLSGIVSALAALCVACCA. Residues 26-244 lie on the Extracellular side of the membrane; the sequence is QSPSTGNISV…SFRIKRNIGY (219 aa). N-linked (GlcNAc...) asparagine glycans are attached at residues asparagine 32, asparagine 104, asparagine 173, and asparagine 195. Cysteine 160 and cysteine 174 are joined by a disulfide. Helical transmembrane passes span 245 to 266, 271 to 292, and 304 to 326; these read FILQ…SFWI, SAAR…NTHL, and AIDV…YAFV. Over 327–465 the chain is Cytoplasmic; the sequence is NYIFFGRGPR…DLTDVSTIDK (139 aa). A helical transmembrane segment spans residues 466–487; sequence WSRIIFPITFGFFNLVYWLYYV.

The protein belongs to the ligand-gated ion channel (TC 1.A.9) family. Gamma-aminobutyric acid receptor (TC 1.A.9.5) subfamily. GABRB4 sub-subfamily. As to quaternary structure, generally pentameric. There are five types of GABA(A) receptor chains: alpha, beta, gamma, delta, and rho.

The protein localises to the postsynaptic cell membrane. It localises to the cell membrane. Its function is as follows. GABA, the major inhibitory neurotransmitter in the vertebrate brain, mediates neuronal inhibition by binding to the GABA/benzodiazepine receptor and opening an integral chloride channel. This chain is Gamma-aminobutyric acid receptor subunit beta-4 (GABRB4), found in Gallus gallus (Chicken).